Reading from the N-terminus, the 430-residue chain is Gamma-glutamyl phosphate reductase (430 aa).

Belongs to the gamma-glutamyl phosphate reductase family.

The protein localises to the cytoplasm. It catalyses the reaction L-glutamate 5-semialdehyde + phosphate + NADP(+) = L-glutamyl 5-phosphate + NADPH + H(+). Its pathway is amino-acid biosynthesis; L-proline biosynthesis; L-glutamate 5-semialdehyde from L-glutamate: step 2/2. Functionally, catalyzes the NADPH-dependent reduction of L-glutamate 5-phosphate into L-glutamate 5-semialdehyde and phosphate. The product spontaneously undergoes cyclization to form 1-pyrroline-5-carboxylate. This is Gamma-glutamyl phosphate reductase from Psychrobacter arcticus (strain DSM 17307 / VKM B-2377 / 273-4).